We begin with the raw amino-acid sequence, 1429 residues long: DNA-directed RNA polymerase subunit beta' (1429 aa).

Positions 68, 70, 83, and 86 each coordinate Zn(2+). Residues D459, D461, and D463 each contribute to the Mg(2+) site. Residues C805, C879, C886, and C889 each contribute to the Zn(2+) site. Residues 1407–1429 are disordered; that stretch reads ESFPLLGGDGEPASTTSSTTEGE. A compositionally biased stretch (polar residues) spans 1419-1429; sequence ASTTSSTTEGE.

Belongs to the RNA polymerase beta' chain family. As to quaternary structure, the RNAP catalytic core consists of 2 alpha, 1 beta, 1 beta' and 1 omega subunit. When a sigma factor is associated with the core the holoenzyme is formed, which can initiate transcription. Requires Mg(2+) as cofactor. Zn(2+) is required as a cofactor.

The catalysed reaction is RNA(n) + a ribonucleoside 5'-triphosphate = RNA(n+1) + diphosphate. DNA-dependent RNA polymerase catalyzes the transcription of DNA into RNA using the four ribonucleoside triphosphates as substrates. This chain is DNA-directed RNA polymerase subunit beta', found in Rhodopirellula baltica (strain DSM 10527 / NCIMB 13988 / SH1).